A 176-amino-acid polypeptide reads, in one-letter code: ATP synthase subunit b, chloroplastic (176 aa).

Residues 19 to 39 (LDLLETNIINIFILIIILIYL) traverse the membrane as a helical segment.

This sequence belongs to the ATPase B chain family. As to quaternary structure, F-type ATPases have 2 components, F(1) - the catalytic core - and F(0) - the membrane proton channel. F(1) has five subunits: alpha(3), beta(3), gamma(1), delta(1), epsilon(1). F(0) has four main subunits: a(1), b(1), b'(1) and c(10-14). The alpha and beta chains form an alternating ring which encloses part of the gamma chain. F(1) is attached to F(0) by a central stalk formed by the gamma and epsilon chains, while a peripheral stalk is formed by the delta, b and b' chains.

The protein localises to the plastid. It localises to the chloroplast thylakoid membrane. Functionally, f(1)F(0) ATP synthase produces ATP from ADP in the presence of a proton or sodium gradient. F-type ATPases consist of two structural domains, F(1) containing the extramembraneous catalytic core and F(0) containing the membrane proton channel, linked together by a central stalk and a peripheral stalk. During catalysis, ATP synthesis in the catalytic domain of F(1) is coupled via a rotary mechanism of the central stalk subunits to proton translocation. Component of the F(0) channel, it forms part of the peripheral stalk, linking F(1) to F(0). The protein is ATP synthase subunit b, chloroplastic of Galdieria sulphuraria (Red alga).